The primary structure comprises 287 residues: Phosphatidylserine decarboxylase proenzyme (287 aa).

Active-site charge relay system; for autoendoproteolytic cleavage activity residues include Asp-89, His-146, and Ser-252. Ser-252 (schiff-base intermediate with substrate; via pyruvic acid; for decarboxylase activity) is an active-site residue. Ser-252 carries the pyruvic acid (Ser); by autocatalysis modification.

The protein belongs to the phosphatidylserine decarboxylase family. PSD-B subfamily. Prokaryotic type I sub-subfamily. In terms of assembly, heterodimer of a large membrane-associated beta subunit and a small pyruvoyl-containing alpha subunit. Pyruvate is required as a cofactor. Is synthesized initially as an inactive proenzyme. Formation of the active enzyme involves a self-maturation process in which the active site pyruvoyl group is generated from an internal serine residue via an autocatalytic post-translational modification. Two non-identical subunits are generated from the proenzyme in this reaction, and the pyruvate is formed at the N-terminus of the alpha chain, which is derived from the carboxyl end of the proenzyme. The autoendoproteolytic cleavage occurs by a canonical serine protease mechanism, in which the side chain hydroxyl group of the serine supplies its oxygen atom to form the C-terminus of the beta chain, while the remainder of the serine residue undergoes an oxidative deamination to produce ammonia and the pyruvoyl prosthetic group on the alpha chain. During this reaction, the Ser that is part of the protease active site of the proenzyme becomes the pyruvoyl prosthetic group, which constitutes an essential element of the active site of the mature decarboxylase.

Its subcellular location is the cell membrane. The enzyme catalyses a 1,2-diacyl-sn-glycero-3-phospho-L-serine + H(+) = a 1,2-diacyl-sn-glycero-3-phosphoethanolamine + CO2. It functions in the pathway phospholipid metabolism; phosphatidylethanolamine biosynthesis; phosphatidylethanolamine from CDP-diacylglycerol: step 2/2. In terms of biological role, catalyzes the formation of phosphatidylethanolamine (PtdEtn) from phosphatidylserine (PtdSer). In Shewanella sediminis (strain HAW-EB3), this protein is Phosphatidylserine decarboxylase proenzyme.